A 179-amino-acid polypeptide reads, in one-letter code: Lebocin-3 (179 aa).

An N-terminal signal peptide occupies residues 1–16 (MYKFLVFSSVLVLFFA). A propeptide spanning residues 17–120 (QASCQRFIQP…QPIESHRNTR (104 aa)) is cleaved from the precursor. A glycan (O-linked (GalNAc...) threonine) is linked at Thr-135. A propeptide spanning residues 153–179 (RRHASEDQEELRQYNEHFLIPRDIFQE) is cleaved from the precursor.

This sequence belongs to the lebocin family. In terms of processing, O-glycosylation is important for the antibacterial activity of lebocin. In terms of tissue distribution, hemolymph. Produced in fat body.

It is found in the secreted. Functionally, antibacterial peptide. This chain is Lebocin-3 (LEB3), found in Bombyx mori (Silk moth).